The chain runs to 284 residues: NADH-cytochrome b5 reductase 1 (284 aa).

Residues 8-28 (PLVIFSTLAAIILAAVAVYVV) form a helical membrane-spanning segment. An FAD-binding FR-type domain is found at 41–144 (DVFQKFPLIE…RGPKGFFTYT (104 aa)). Residues 124 to 139 (DSKSVGDHIEVRGPKG) and 150 to 182 (HLGMIAGGTGIAPMYQVLTAILTNPDDKTKISL) each bind FAD.

This sequence belongs to the flavoprotein pyridine nucleotide cytochrome reductase family. In terms of assembly, monomer. Component of the 2-(3-amino-3-carboxypropyl)histidine synthase complex composed of DPH1, DPH2, DPH3 and a NADH-dependent reductase, predominantly CBR1. FAD is required as a cofactor.

It localises to the mitochondrion outer membrane. The catalysed reaction is 2 Fe(III)-[cytochrome b5] + NADH = 2 Fe(II)-[cytochrome b5] + NAD(+) + H(+). The enzyme catalyses 2 Fe(3+)-[Dph3] + NADH = 2 Fe(2+)-[Dph3] + NAD(+) + H(+). The protein operates within protein modification; peptidyl-diphthamide biosynthesis. Functionally, NADH-dependent reductase for DPH3 and cytochrome b5. Required for the first step of diphthamide biosynthesis, a post-translational modification of histidine which occurs in elongation factor 2. DPH1 and DPH2 transfer a 3-amino-3-carboxypropyl (ACP) group from S-adenosyl-L-methionine (SAM) to a histidine residue, the reaction is assisted by a reduction system comprising DPH3 and a NADH-dependent reductase, predominantly CBR1. By reducing DPH3, also involved in the formation of the tRNA wobble base modification mcm5s 2U (5-methoxycarbonylmethyl-2-thiouridine), mediated by the elongator complex. The cytochrome b5/NADH cytochrome b5 reductase electron transfer system supports the catalytic activity of several sterol biosynthetic enzymes. The polypeptide is NADH-cytochrome b5 reductase 1 (CBR1) (Meyerozyma guilliermondii (strain ATCC 6260 / CBS 566 / DSM 6381 / JCM 1539 / NBRC 10279 / NRRL Y-324) (Yeast)).